The sequence spans 200 residues: Imidazole glycerol phosphate synthase subunit HisH (200 aa).

The Glutamine amidotransferase type-1 domain occupies 3-200; sequence DVALIDAGGA…LRNFLEMSFP (198 aa). Cys-78 (nucleophile) is an active-site residue. Residues His-179 and Glu-181 contribute to the active site.

Heterodimer of HisH and HisF.

The protein localises to the cytoplasm. The enzyme catalyses 5-[(5-phospho-1-deoxy-D-ribulos-1-ylimino)methylamino]-1-(5-phospho-beta-D-ribosyl)imidazole-4-carboxamide + L-glutamine = D-erythro-1-(imidazol-4-yl)glycerol 3-phosphate + 5-amino-1-(5-phospho-beta-D-ribosyl)imidazole-4-carboxamide + L-glutamate + H(+). The catalysed reaction is L-glutamine + H2O = L-glutamate + NH4(+). It functions in the pathway amino-acid biosynthesis; L-histidine biosynthesis; L-histidine from 5-phospho-alpha-D-ribose 1-diphosphate: step 5/9. Its function is as follows. IGPS catalyzes the conversion of PRFAR and glutamine to IGP, AICAR and glutamate. The HisH subunit catalyzes the hydrolysis of glutamine to glutamate and ammonia as part of the synthesis of IGP and AICAR. The resulting ammonia molecule is channeled to the active site of HisF. The sequence is that of Imidazole glycerol phosphate synthase subunit HisH from Xanthomonas axonopodis pv. citri (strain 306).